We begin with the raw amino-acid sequence, 162 residues long: Cyanate hydratase (162 aa).

Residues Arg-103, Glu-106, and Ser-129 contribute to the active site.

It belongs to the cyanase family.

It catalyses the reaction cyanate + hydrogencarbonate + 3 H(+) = NH4(+) + 2 CO2. Its function is as follows. Catalyzes the reaction of cyanate with bicarbonate to produce ammonia and carbon dioxide. The polypeptide is Cyanate hydratase (Phaeosphaeria nodorum (strain SN15 / ATCC MYA-4574 / FGSC 10173) (Glume blotch fungus)).